Consider the following 562-residue polypeptide: Arginine--tRNA ligase (562 aa).

The short motif at 122–132 (PNIAKPISMGH) is the 'HIGH' region element.

Belongs to the class-I aminoacyl-tRNA synthetase family. Monomer.

It is found in the cytoplasm. The catalysed reaction is tRNA(Arg) + L-arginine + ATP = L-arginyl-tRNA(Arg) + AMP + diphosphate. The chain is Arginine--tRNA ligase from Pediococcus pentosaceus (strain ATCC 25745 / CCUG 21536 / LMG 10740 / 183-1w).